A 342-amino-acid polypeptide reads, in one-letter code: Nicotinate-nucleotide--dimethylbenzimidazole phosphoribosyltransferase (342 aa).

Catalysis depends on Glu-311, which acts as the Proton acceptor.

Belongs to the CobT family.

The catalysed reaction is 5,6-dimethylbenzimidazole + nicotinate beta-D-ribonucleotide = alpha-ribazole 5'-phosphate + nicotinate + H(+). It participates in nucleoside biosynthesis; alpha-ribazole biosynthesis; alpha-ribazole from 5,6-dimethylbenzimidazole: step 1/2. Functionally, catalyzes the synthesis of alpha-ribazole-5'-phosphate from nicotinate mononucleotide (NAMN) and 5,6-dimethylbenzimidazole (DMB). The sequence is that of Nicotinate-nucleotide--dimethylbenzimidazole phosphoribosyltransferase from Vibrio atlanticus (strain LGP32) (Vibrio splendidus (strain Mel32)).